The sequence spans 588 residues: Calicin (588 aa).

Residues 12-124 form the BTB domain; that stretch reads SFVLQNLNRQ…RLRVHCNDFL (113 aa). Residues 133–235 enclose the BACK domain; sequence CLRYLFLAEL…NAVSNKTLVF (103 aa). Position 149 is a phosphoserine (S149). 6 Kelch repeats span residues 280-327, 328-375, 377-423, 425-475, 476-525, and 526-580; these read SVVI…SAGR, YIYI…TCGG, VYSV…TKGD, HLYI…SFQQ, DNIL…IGDS, and KVFV…LAKL.

As to quaternary structure, interacts with CYLC1; the interaction may be relevant for proper acrosome attachment to the nuclear envelope. In terms of tissue distribution, expressed in testis, in spermatozoa (at protein level).

The protein localises to the cytoplasm. Its subcellular location is the cytoskeleton. It localises to the perinuclear theca. The protein resides in the calyx. Required for both nuclear and acrosomal shaping during spermiogenesis. The sequence is that of Calicin (CCIN) from Homo sapiens (Human).